The following is a 243-amino-acid chain: Proteasome subunit beta (243 aa).

Positions 1-46 (MFNPNNGSEFARNRARLDDTPNPYEPEVGSLPEGDRSQAGSDTVNK) are disordered. The propeptide at 1–48 (MFNPNNGSEFARNRARLDDTPNPYEPEVGSLPEGDRSQAGSDTVNKTG) is removed in mature form; by autocatalysis. T49 functions as the Nucleophile in the catalytic mechanism.

The protein belongs to the peptidase T1B family. The 20S proteasome core is composed of 14 alpha and 14 beta subunits that assemble into four stacked heptameric rings, resulting in a barrel-shaped structure. The two inner rings, each composed of seven catalytic beta subunits, are sandwiched by two outer rings, each composed of seven alpha subunits. The catalytic chamber with the active sites is on the inside of the barrel. Has a gated structure, the ends of the cylinder being occluded by the N-termini of the alpha-subunits. Is capped at one or both ends by the proteasome regulatory ATPase, PAN.

It is found in the cytoplasm. The catalysed reaction is Cleavage of peptide bonds with very broad specificity.. With respect to regulation, the formation of the proteasomal ATPase PAN-20S proteasome complex, via the docking of the C-termini of PAN into the intersubunit pockets in the alpha-rings, triggers opening of the gate for substrate entry. Interconversion between the open-gate and close-gate conformations leads to a dynamic regulation of the 20S proteasome proteolysis activity. Component of the proteasome core, a large protease complex with broad specificity involved in protein degradation. This is Proteasome subunit beta from Halobacterium salinarum (strain ATCC 29341 / DSM 671 / R1).